The sequence spans 438 residues: Alkylcitrate synthase tstJ (438 aa).

Catalysis depends on residues His309 and Asp365.

This sequence belongs to the citrate synthase family.

It carries out the reaction (2E,10E)-dode-2,10-dicenoyl-CoA + oxaloacetate + H2O = (4E,11E)-2-hydroxytrideca-4,11-dien-1,2,3-tricarboxylate + CoA + H(+). It functions in the pathway secondary metabolite biosynthesis. Alkylcitrate synthase; part of the gene cluster that mediates the biosynthesis of the antihypercholesterolemic agents phomoidrides which are dimeric anhydrides. Within the pathway, the alkylcitrate synthase (ACS) tstJ and the alkylcitrate dehydratase (ACDH) tstI produce the decarboxylated monomeric anhydrides by coupling the C12-fatty acyl product from phiA with oxalacetic acid. The pathway begins with the highly reducing polyketide synthase tstA that catalyzes the formation of a C12-fatty acyl-ACP, starting from one acetate and 5 malonate units. The hydrolase tstM is involved in the release of the C12-fatty acyl chain from phiA. The alkylcitrate synthase (ACS) tstJ and the alkylcitrate dehydratase (ACDH) tstI then give rise to decarboxylated monomeric anhydrides by coupling the C12-fatty acyl chain with oxalacetic acid. The cyclase tstC is responsible for the dimerization of the monomeric anhydrides which leads to the production of prephomoidride that contains the characteristic bicyclo[4.3.1]deca-1,6-diene system of phomoidrides. Iterative oxidation catalyzed by the alpha-ketoglutarate-dependent dioxygenase tstK produced then phomoidride A. Finally, the methyltransferase tstE converts phomoidride A to phomoidride B via an acetalization reaction. The phosphatidylethanolamine-binding protein tstB and tstN are not essential for dimerization and their functions have still to be determined. This is Alkylcitrate synthase tstJ from Talaromyces stipitatus (strain ATCC 10500 / CBS 375.48 / QM 6759 / NRRL 1006) (Penicillium stipitatum).